Consider the following 538-residue polypeptide: Cytochrome c-552 (538 aa).

A signal peptide spans Met-1 to Ala-55. His-133 contributes to the heme c binding site. Heme-binding residues include Cys-161, Cys-164, and Lys-165. Heme c contacts are provided by Cys-199, Cys-202, His-203, Cys-264, Cys-267, and His-268. The Ca(2+) site is built by Glu-270, Tyr-271, Lys-316, and Gln-318. Substrate is bound at residue Tyr-271. Residue His-319 coordinates substrate. Residues His-330, Cys-337, Cys-340, His-341, His-356, Cys-369, Cys-372, His-373, and His-448 each coordinate heme c.

The protein belongs to the cytochrome c-552 family. Ca(2+) is required as a cofactor. Requires heme c as cofactor.

It localises to the periplasm. It catalyses the reaction 6 Fe(III)-[cytochrome c] + NH4(+) + 2 H2O = 6 Fe(II)-[cytochrome c] + nitrite + 8 H(+). Its pathway is nitrogen metabolism; nitrate reduction (assimilation). In terms of biological role, catalyzes the reduction of nitrite to ammonia, consuming six electrons in the process. The protein is Cytochrome c-552 of Haemophilus influenzae (strain ATCC 51907 / DSM 11121 / KW20 / Rd).